A 60-amino-acid chain; its full sequence is Small ribosomal subunit protein eS17 (60 aa).

Belongs to the eukaryotic ribosomal protein eS17 family.

In Methanosphaera stadtmanae (strain ATCC 43021 / DSM 3091 / JCM 11832 / MCB-3), this protein is Small ribosomal subunit protein eS17.